The chain runs to 259 residues: Phosphatidylglycerol--prolipoprotein diacylglyceryl transferase (259 aa).

Transmembrane regions (helical) follow at residues 12-32 (LSLH…VYLA), 46-66 (IIDF…IYYV), 83-103 (IWNG…VLFV), and 109-129 (VLNP…AQAI). Arginine 131 is an a 1,2-diacyl-sn-glycero-3-phospho-(1'-sn-glycerol) binding site. Transmembrane regions (helical) follow at residues 167-187 (VPTF…IMVW), 194-214 (LVDG…RLVI), and 226-246 (GIRV…VFIF).

Belongs to the Lgt family.

Its subcellular location is the cell membrane. The catalysed reaction is L-cysteinyl-[prolipoprotein] + a 1,2-diacyl-sn-glycero-3-phospho-(1'-sn-glycerol) = an S-1,2-diacyl-sn-glyceryl-L-cysteinyl-[prolipoprotein] + sn-glycerol 1-phosphate + H(+). It functions in the pathway protein modification; lipoprotein biosynthesis (diacylglyceryl transfer). Its function is as follows. Catalyzes the transfer of the diacylglyceryl group from phosphatidylglycerol to the sulfhydryl group of the N-terminal cysteine of a prolipoprotein, the first step in the formation of mature lipoproteins. This Streptococcus equi subsp. equi (strain 4047) protein is Phosphatidylglycerol--prolipoprotein diacylglyceryl transferase.